The primary structure comprises 860 residues: DNA mismatch repair protein MutS (860 aa).

ATP is bound at residue 621-628 (GPNMGGKS).

Belongs to the DNA mismatch repair MutS family.

Functionally, this protein is involved in the repair of mismatches in DNA. It is possible that it carries out the mismatch recognition step. This protein has a weak ATPase activity. This Salmonella arizonae (strain ATCC BAA-731 / CDC346-86 / RSK2980) protein is DNA mismatch repair protein MutS.